A 667-amino-acid chain; its full sequence is Heat shock protein DDB_G0283913 (667 aa).

The next 2 membrane-spanning stretches (helical) occupy residues 2 to 22 and 224 to 244; these read FVGTLVIIICTTLIIIIKKIL and MFICDMSFSLASIIVYVLNEL. Residues 18–82 adopt a coiled-coil conformation; sequence IKKILKRKKE…ELAKKLNCYI (65 aa). Positions 432-478 are disordered; the sequence is IDDTIQDNDKSGSEVSTPTISSSSSSPLQPIIKDEKDDNIENKSDEA. Residues 444 to 457 show a composition bias toward low complexity; it reads SEVSTPTISSSSSS. Residues 463–477 are compositionally biased toward basic and acidic residues; that stretch reads IKDEKDDNIENKSDE. A sHSP domain is found at 551–667; it reads MVFSSGFKPF…VITFKFEKIG (117 aa).

It belongs to the small heat shock protein (HSP20) family.

It localises to the membrane. This is Heat shock protein DDB_G0283913 from Dictyostelium discoideum (Social amoeba).